Reading from the N-terminus, the 252-residue chain is MLLLFDVGNTHTTVALTRDGKMFEKYRISTKKYETEDELYVFLKSLYGGTVIEGIATVVSSVVPSLNIVFEYFANKYGDGNVYFVSSTDYNKIVWNINYPKELGADRVCDVIAAYKEYGKDCIIIDYGTAITIDVLKDGVYEGGVIMPGFAMMINALFKGTAKLPLVEVKPYDGFIGKDTESNIRIGTINATVGAIKYVVENITKEYNTPPVIIHTGGHALYVQKIVDGVVDRDLTLRGMYYFYEEKKNSAC.

6-13 (DVGNTHTT) contributes to the ATP binding site. 104-107 (GADR) is a binding site for substrate. Residue Asp106 is the Proton acceptor of the active site. Asp126 contacts K(+). Thr129 provides a ligand contact to ATP. Thr180 contacts substrate.

It belongs to the type III pantothenate kinase family. In terms of assembly, homodimer. NH4(+) is required as a cofactor. It depends on K(+) as a cofactor.

The protein localises to the cytoplasm. The catalysed reaction is (R)-pantothenate + ATP = (R)-4'-phosphopantothenate + ADP + H(+). Its pathway is cofactor biosynthesis; coenzyme A biosynthesis; CoA from (R)-pantothenate: step 1/5. In terms of biological role, catalyzes the phosphorylation of pantothenate (Pan), the first step in CoA biosynthesis. The protein is Type III pantothenate kinase of Fervidobacterium nodosum (strain ATCC 35602 / DSM 5306 / Rt17-B1).